The primary structure comprises 942 residues: MAAQPPTGIRLSALCPKFLHTNSTSHTWPFSAVAELIDNAYDPDVNAKQIWIDKTVISDHICLTFTDNGNGMTADKLHKMLSFGFSDKVTMNGHVPVGLYGNGFKSGSMRLGKDAMVFTKNGETMSVGFLSQTYLEVIKAEHVVVPIVTFNKHRQMINLTESKASLAAILEHSLFSTEQKLLAELNAIMGKKGTRIIIWNLRSYKNATEFDFEKDKYDIRIPEDLDETAGRKGYKKQERMDQIAPESDYSLRAYCSILYLKPRMQIIIRGQKVKTQLVSKSLAYIERDVYRPKFLTRTVRITFGFNCRNKDHYGIMMYHKNRLIKAYEKVGCQLKANNMGVGVVGIIECNFLKPTHNKQDFDYTNEYRLTILALGEKLNDYWNEMKVKKNAEYPVNLPVEDIQKRPDQTWVQCDACLKWRKLPDGIDQLPEKWYCSNNPDPQFRNCEVPEEPEDEDLVHPTYEKTYKKTSKERFRIRQPEILPRILPQINPELLYQTSVSSQSFSPVKESVPRPHLSEVTSPFAARIINLNLASPASEPENSSMKRKLGVHSSILNAKTRRLSNPPVENSSYKNDDDEDVIILEENSTPKPAVDLEVKSDIEVKSEQSHTEQSGIHVDLVSSPKPCVQASSTSTSTSRSDPGITVSTQTDAPGLTVKKEESMEEDMGVRNGTATLSCVGTEAKVQETSAESVDATSHQLQELRSELLVVTQERDDYKRQCQMFTDQIQVLQQRLLEMNDKCVKKEKCHQSTETDAVFLLDSVNGQAESLDHLGSQYQQALQEIERLKRQCSALQQVKSECSQASCTESKSEVDEMAVQLDDVFRQLDKCTIERDQYKNEVQLLEIEKSHIHSQCEELQTEVEQLKSTGQQAAADGSTASNAEEPVSYVDGESLKLRSLRVNVGQLLAMIVPDLDLQQVNYDVDVVDEILGQVVEQMSEISST.

Glycyl lysine isopeptide (Lys-Gly) (interchain with G-Cter in SUMO2) cross-links involve residues K191, K205, K280, and K293. Positions 326-353 (AYEKVGCQLKANNMGVGVVGIIECNFLK) are nuclear matrix binding. Residues 404-454 (KRPDQTWVQCDACLKWRKLPDGIDQLPEKWYCSNNPDPQFRNCEVPEEPED) form a CW-type zinc finger. 4 residues coordinate Zn(2+): C413, C416, C435, and C446. An RNA binding region spans residues 503–594 (SFSPVKESVP…ENSTPKPAVD (92 aa)). Residues S517 and S543 each carry the phosphoserine modification. A Glycyl lysine isopeptide (Lys-Gly) (interchain with G-Cter in SUMO2) cross-link involves residue K558. S563 is subject to Phosphoserine. K604 participates in a covalent cross-link: Glycyl lysine isopeptide (Lys-Gly) (interchain with G-Cter in SUMO1); alternate. A Glycyl lysine isopeptide (Lys-Gly) (interchain with G-Cter in SUMO2); alternate cross-link involves residue K604. The interval 623–654 (PKPCVQASSTSTSTSRSDPGITVSTQTDAPGL) is disordered. The span at 630–639 (SSTSTSTSRS) shows a compositional bias: low complexity. Residues K657, K658, and K743 each participate in a glycyl lysine isopeptide (Lys-Gly) (interchain with G-Cter in SUMO1); alternate cross-link. Glycyl lysine isopeptide (Lys-Gly) (interchain with G-Cter in SUMO2); alternate cross-links involve residues K657, K658, and K743. Residues 696-874 (SHQLQELRSE…KSTGQQAAAD (179 aa)) adopt a coiled-coil conformation. The residue at position 768 (S768) is a Phosphoserine. K797 is covalently cross-linked (Glycyl lysine isopeptide (Lys-Gly) (interchain with G-Cter in SUMO1); alternate). A Glycyl lysine isopeptide (Lys-Gly) (interchain with G-Cter in SUMO2); alternate cross-link involves residue K797.

As to quaternary structure, homodimer. The sumoylated form interacts with PML (via SUMO-interacting motif). Interacts with TP53. Post-translationally, sumoylation is involved in interaction with PML and localization to PML nuclear bodies.

The protein localises to the nucleus. It is found in the nucleoplasm. It localises to the nucleus matrix. Its subcellular location is the PML body. The protein resides in the chromosome. Dimerization of the ATPase domain is strictly required for the catalytic activity and binding to double-stranded DNA. Disrupting the interface between ATPase and the CW domains releases autoinhibition since the CW domain sterically impedes binding of the ATPase domain to DNA. Functionally, nuclear matrix protein which forms MORC3-NBs (nuclear bodies) via an ATP-dependent mechanism and plays a role in innate immunity by restricting different viruses through modulation of the IFN response. Mechanistically, possesses a primary antiviral function through a MORC3-regulated element that activates IFNB1, and this function is guarded by a secondary IFN-repressing function. Sumoylated MORC3-NBs associates with PML-NBs and recruits TP53 and SP100, thus regulating TP53 activity. Binds RNA in vitro. Histone methylation reader which binds to non-methylated (H3K4me0), monomethylated (H3K4me1), dimethylated (H3K4me2) and trimethylated (H3K4me3) 'Lys-4' on histone H3. The order of binding preference is H3K4me3 &gt; H3K4me2 &gt; H3K4me1 &gt; H3K4me0. This is MORC family CW-type zinc finger protein 3 from Mus musculus (Mouse).